Here is a 220-residue protein sequence, read N- to C-terminus: Putative pyrophosphatase PpaX (220 aa).

The active-site Nucleophile is Asp9.

It belongs to the HAD-like hydrolase superfamily. PpaX family. Mg(2+) serves as cofactor.

The catalysed reaction is diphosphate + H2O = 2 phosphate + H(+). The polypeptide is Putative pyrophosphatase PpaX (Caldanaerobacter subterraneus subsp. tengcongensis (strain DSM 15242 / JCM 11007 / NBRC 100824 / MB4) (Thermoanaerobacter tengcongensis)).